The following is a 262-amino-acid chain: Proline-rich protein 23C (262 aa).

2 disordered regions span residues 1–52 (MGSR…AGTP) and 225–262 (VPSS…LFQE). The span at 226-242 (PSSPLQPLPPSPSPGPH) shows a compositional bias: pro residues. Residues 243–252 (ARPELPERPP) show a composition bias toward basic and acidic residues. Positions 253–262 (CKVRRRLFQE) are enriched in basic residues.

It belongs to the PRR23 family.

This is Proline-rich protein 23C (PRR23C) from Homo sapiens (Human).